The chain runs to 932 residues: Protocadherin gamma-A8 (932 aa).

A signal peptide spans 1–29 (MAAPQSRPRRGELILLCALLGTLWEIGRG). 6 consecutive Cadherin domains span residues 30 to 133 (QIRY…NPKF), 134 to 242 (QVED…APVF), 243 to 347 (PHPI…RPEV), 348 to 452 (IITS…PPTF), 453 to 562 (PHAS…APEI), and 570 to 682 (DGST…KPSV). Residues 30 to 692 (QIRYSVPEET…DPNDSSLTLY (663 aa)) are Extracellular-facing. An N-linked (GlcNAc...) asparagine glycan is attached at N47. N414, N419, and N545 each carry an N-linked (GlcNAc...) asparagine glycan. N-linked (GlcNAc...) asparagine glycosylation is present at N685. The chain crosses the membrane as a helical span at residues 693-713 (LVVAVAAISCVFLAFVAVLLG). At 714 to 932 (LRLRRWHKSH…KKKSGKKEKK (219 aa)) the chain is on the cytoplasmic side. 2 disordered regions span residues 804–841 (ADHGQQAPPNTDWRFSQAQRPGTSGSQNGDDTGTWPNN) and 902–932 (ATLTNAAGKRDGKAPAGGNGNKKKSGKKEKK). Residues 810-841 (APPNTDWRFSQAQRPGTSGSQNGDDTGTWPNN) are compositionally biased toward polar residues. Positions 922–932 (NKKKSGKKEKK) are enriched in basic residues.

It is found in the cell membrane. Functionally, potential calcium-dependent cell-adhesion protein. May be involved in the establishment and maintenance of specific neuronal connections in the brain. In Pan troglodytes (Chimpanzee), this protein is Protocadherin gamma-A8 (PCDHGA8).